An 891-amino-acid chain; its full sequence is DNA polymerase I (891 aa).

Positions 1-313 constitute a 5'-3' exonuclease domain; it reads MEQPVIKEGT…LLDNTPALDN (313 aa). The 3'-5' exonuclease domain occupies 314 to 488; the sequence is TPKKSCMIVL…RLCEYFEKGG (175 aa). Positions 492 to 890 are polymerase; that stretch reads NLLSLAREIE…FIAKRWNELK (399 aa).

It belongs to the DNA polymerase type-A family. In terms of assembly, single-chain monomer with multiple functions.

It catalyses the reaction DNA(n) + a 2'-deoxyribonucleoside 5'-triphosphate = DNA(n+1) + diphosphate. Its function is as follows. In addition to polymerase activity, this DNA polymerase exhibits 3'-5' and 5'-3' exonuclease activity. The chain is DNA polymerase I (polA) from Helicobacter pylori (strain ATCC 700392 / 26695) (Campylobacter pylori).